Here is a 229-residue protein sequence, read N- to C-terminus: Platelet-activating factor acetylhydrolase IB subunit alpha2 (229 aa).

N-acetylserine is present on Ser-2. Phosphoserine is present on Ser-2. Ser-48 is an active-site residue. Position 64 is a phosphoserine (Ser-64). Catalysis depends on residues Asp-193 and His-196. Thr-220 is modified (phosphothreonine).

Belongs to the 'GDSL' lipolytic enzyme family. Platelet-activating factor acetylhydrolase IB beta/gamma subunits subfamily. In terms of assembly, forms a catalytic dimer which is either homodimer (alpha2/alpha2 homodimer) or heterodimer with PAFAH1B3 (alpha2/alpha1 heterodimer). Component of the cytosolic (PAF-AH (I)) heterotetrameric enzyme, which is composed of PAFAH1B1 (beta), PAFAH1B2 (alpha2) and PAFAH1B3 (alpha1) subunits. The catalytic activity of the enzyme resides in the alpha1 (PAFAH1B3) and alpha2 (PAFAH1B2) subunits, whereas the beta subunit (PAFAH1B1) has regulatory activity. Trimer formation is not essential for the catalytic activity. Interacts (homodimer form) with PAFAH1B1 (homodimer form); PAFAH1B2 competes with NDEL1 for PAFAH1B1 binding. Interacts with VLDLR; this interaction may modulate the Reelin pathway.

It localises to the cytoplasm. It catalyses the reaction a 1-O-alkyl-2-acetyl-sn-glycero-3-phosphocholine + H2O = a 1-O-alkyl-sn-glycero-3-phosphocholine + acetate + H(+). The enzyme catalyses 1-O-hexadecyl-2-acetyl-sn-glycero-3-phosphocholine + H2O = 1-O-hexadecyl-sn-glycero-3-phosphocholine + acetate + H(+). The catalysed reaction is 1-O-hexadecyl-2-acetyl-sn-glycero-3-phosphate + H2O = 1-O-hexadecyl-sn-glycero-3-phosphate + acetate + H(+). It carries out the reaction 1-O-hexadecyl-2-acetyl-sn-glycero-3-phosphoethanolamine + H2O = 1-O-hexadecyl-sn-glycero-3-phosphoethanolamine + acetate + H(+). Its activity is regulated as follows. Beta subunit (PAFAH1B1) stimulates the acetylhydrolase activity of the alpha2/alpha2 catalytic homodimer. In terms of biological role, alpha2 catalytic subunit of the cytosolic type I platelet-activating factor (PAF) acetylhydrolase (PAF-AH (I)) heterotetrameric enzyme that catalyzes the hydrolyze of the acetyl group at the sn-2 position of PAF and its analogs and modulates the action of PAF. The activity and substrate specificity of PAF-AH (I) are affected by its subunit composition. The alpha2/alpha2 homodimer (PAFAH1B2/PAFAH1B2 homodimer) hydrolyzes PAF and 1-O-alkyl-2-acetyl-sn-glycero-3-phosphorylethanolamine (AAGPE) more efficiently than 1-O-alkyl-2-acetyl-sn-glycero-3-phosphoric acid (AAGPA). In contrast, the alpha1/alpha2 heterodimer(PAFAH1B3/PAFAH1B3 heterodimer) hydrolyzes AAGPA more efficiently than PAF, but has little hydrolytic activity towards AAGPE. May play a role in male germ cell meiosis during the late pachytenestage and meiotic divisions as well as early spermiogenesis. The polypeptide is Platelet-activating factor acetylhydrolase IB subunit alpha2 (Mus musculus (Mouse)).